The sequence spans 892 residues: Alpha-actinin-1 (892 aa).

M1 carries the post-translational modification N-acetylmethionine. An actin-binding region spans residues 1–247 (MDHYDSQQTN…IMTYVSSFYH (247 aa)). S6 is subject to Phosphoserine. Y12 is subject to Phosphotyrosine; by FAK1. 2 Calponin-homology (CH) domains span residues 31 to 135 (KQQR…LRFA) and 144 to 250 (TSAK…HAFS). Residues K95 and K195 each carry the N6-acetyllysine modification. 4 Spectrin repeats span residues 274 to 384 (QLME…WLLN), 394 to 499 (HLAE…ALER), 509 to 620 (QLYL…ALTE), and 630 to 733 (RLRK…EVEN). Positions 274-733 (QLMEDYEKLA…IARTINEVEN (460 aa)) are interaction with DDN. S471 carries the phosphoserine modification. Position 676 is an N6-acetyllysine (K676). Phosphoserine is present on S677. 2 EF-hand domains span residues 746–781 (EQMNEFRASFNHFDRDHSGTLGPEEFKACLISLGYD) and 787–822 (QGEAEFARIMSIVDPNRLGVVTFQAFIDFMSRETAD). Residues D759, D761, S763, T765, and E770 each contribute to the Ca(2+) site. S890 carries the phosphoserine modification.

Belongs to the alpha-actinin family. Homodimer; antiparallel. Interacts with MYOZ2, TTID and LPP. Interacts with DDN. Interacts with PSD. Interacts with MICALL2. Interacts with DNM2 and CTTN. Interacts with PDLIM1. Interacts with PDLIM2. Interacts with PDLIM4 (via PDZ domain). Interacts with IGSF8.

Its subcellular location is the cytoplasm. The protein localises to the cytoskeleton. It is found in the myofibril. The protein resides in the sarcomere. It localises to the z line. Its subcellular location is the cell membrane. The protein localises to the cell junction. It is found in the cell projection. The protein resides in the ruffle. Its function is as follows. F-actin cross-linking protein which is thought to anchor actin to a variety of intracellular structures. Association with IGSF8 regulates the immune synapse formation and is required for efficient T-cell activation. In Bos taurus (Bovine), this protein is Alpha-actinin-1 (ACTN1).